We begin with the raw amino-acid sequence, 194 residues long: Recombination protein RecR (194 aa).

The segment at 53 to 68 adopts a C4-type zinc-finger fold; it reads CEICFNLDVTSPCSIC. Residues 76–171 enclose the Toprim domain; it reads SLLCIVEELG…KVTRLACGIP (96 aa).

This sequence belongs to the RecR family.

May play a role in DNA repair. It seems to be involved in an RecBC-independent recombinational process of DNA repair. It may act with RecF and RecO. This Anaplasma phagocytophilum (strain HZ) protein is Recombination protein RecR.